Consider the following 340-residue polypeptide: HTH-type transcriptional regulator PtxS (340 aa).

One can recognise an HTH lacI-type domain in the interval V12–R67. The H-T-H motif DNA-binding region spans I14–G33.

Homodimer.

Its activity is regulated as follows. 2-ketogluconate acts as a molecular effector and causes dissociation of PtxS from its target promoter. Glucose negatively affects the molecular binding of PtxS and 2KGA, and gluconic acid inhibits the PtxS-2KGA binding reaction. Functionally, involved in the regulation of 2-ketogluconic acid metabolism via the control of the expression of the kgu operon. Binds directly to a 14-bp palindrome sequence via its conserved HTH motif. This is HTH-type transcriptional regulator PtxS from Pseudomonas plecoglossicida.